The sequence spans 111 residues: Phosphoribosyl-ATP pyrophosphatase (111 aa).

It belongs to the PRA-PH family.

It localises to the cytoplasm. It catalyses the reaction 1-(5-phospho-beta-D-ribosyl)-ATP + H2O = 1-(5-phospho-beta-D-ribosyl)-5'-AMP + diphosphate + H(+). It functions in the pathway amino-acid biosynthesis; L-histidine biosynthesis; L-histidine from 5-phospho-alpha-D-ribose 1-diphosphate: step 2/9. This chain is Phosphoribosyl-ATP pyrophosphatase, found in Pseudomonas putida (strain GB-1).